The sequence spans 77 residues: Conotoxin S6.11 (77 aa).

The N-terminal stretch at 1 to 19 (MEKLTILLLVAAVLMSTQA) is a signal peptide. Residues 20 to 50 (LIQGGLDERQKAKSNFFSKRKSNAESWWEGE) constitute a propeptide that is removed on maturation. 3 disulfides stabilise this stretch: C51-C65, C58-C69, and C64-C74.

Belongs to the conotoxin O2 superfamily. In terms of tissue distribution, expressed by the venom duct.

It is found in the secreted. The polypeptide is Conotoxin S6.11 (Conus striatus (Striated cone)).